Here is a 354-residue protein sequence, read N- to C-terminus: Homer protein homolog 2 (354 aa).

In terms of domain architecture, WH1 spans 1–110 (MGEQPIFTTR…EKFQEVREAA (110 aa)). Residues 92 to 120 (SEQQLTKFAEKFQEVREAARLARDKSQEK) adopt a coiled-coil conformation. The interval 114-163 (RDKSQEKIETSSNHSQESGCETPSSTQASSVNGTDDEKASHASPADTHLK) is disordered. Over residues 123 to 146 (TSSNHSQESGCETPSSTQASSVNG) the composition is skewed to polar residues. The stretch at 160–329 (THLKSENDKL…RHLKGELKSF (170 aa)) forms a coiled coil.

It belongs to the Homer family. As to quaternary structure, isoform 1 and isoform 2 encode coiled-coil structures that mediate homo- and heteromultimerization. Interacts with NFATC2; interaction is reduced by AKT activation. Interacts with NFATC1 and NFATC4. Interacts with DAGLA (via PPXXF motif); this interaction is required for the cell membrane localization of DAGLA. As to expression, constitutively expressed in the adult hippocampus.

The protein resides in the cytoplasm. It localises to the cell membrane. The protein localises to the postsynaptic density. Its subcellular location is the synapse. It is found in the cell projection. The protein resides in the stereocilium. Functionally, postsynaptic density scaffolding protein. Binds and cross-links cytoplasmic regions of GRM1, GRM5, ITPR1, DNM3, RYR1, RYR2, SHANK1 and SHANK3. By physically linking GRM1 and GRM5 with ER-associated ITPR1 receptors, it aids the coupling of surface receptors to intracellular calcium release. May also couple GRM1 to PI3 kinase through its interaction with AGAP2. Isoforms can be differently regulated and may play an important role in maintaining the plasticity at glutamatergic synapses. Required for normal hearing. Negatively regulates T cell activation by inhibiting the calcineurin-NFAT pathway. Acts by competing with calcineurin/PPP3CA for NFAT protein binding, hence preventing NFAT activation by PPP3CA. The sequence is that of Homer protein homolog 2 from Rattus norvegicus (Rat).